The chain runs to 222 residues: PKHD-type hydroxylase Syncc9605_1577 (222 aa).

The Fe2OG dioxygenase domain maps to 80–175 (KVHSLLVSRS…RYVCVGWIES (96 aa)). Residues histidine 98, aspartate 100, and histidine 156 each coordinate Fe cation. Arginine 166 serves as a coordination point for 2-oxoglutarate.

Fe(2+) is required as a cofactor. It depends on L-ascorbate as a cofactor.

This Synechococcus sp. (strain CC9605) protein is PKHD-type hydroxylase Syncc9605_1577.